The primary structure comprises 227 residues: Cytochrome c oxidase subunit 2 (227 aa).

At 1-14 (MAYPVQLGFQDAAS) the chain is on the mitochondrial intermembrane side. Residues 15–45 (PIMEELLYFHDHTLMIVFLISSLVLYIISLM) form a helical membrane-spanning segment. The Mitochondrial matrix segment spans residues 46 to 59 (LTTKLMHTSTMDAQ). The helical transmembrane segment at 60-87 (EVETVWTILPAIILILIALPSLRILYMM) threads the bilayer. At 88-227 (DEITTPSLTL…HFEEWLLSMF (140 aa)) the chain is on the mitochondrial intermembrane side. Residues His161, Cys196, Glu198, Cys200, His204, and Met207 each contribute to the Cu cation site. Glu198 is a binding site for Mg(2+).

It belongs to the cytochrome c oxidase subunit 2 family. As to quaternary structure, component of the cytochrome c oxidase (complex IV, CIV), a multisubunit enzyme composed of 14 subunits. The complex is composed of a catalytic core of 3 subunits MT-CO1, MT-CO2 and MT-CO3, encoded in the mitochondrial DNA, and 11 supernumerary subunits COX4I, COX5A, COX5B, COX6A, COX6B, COX6C, COX7A, COX7B, COX7C, COX8 and NDUFA4, which are encoded in the nuclear genome. The complex exists as a monomer or a dimer and forms supercomplexes (SCs) in the inner mitochondrial membrane with NADH-ubiquinone oxidoreductase (complex I, CI) and ubiquinol-cytochrome c oxidoreductase (cytochrome b-c1 complex, complex III, CIII), resulting in different assemblies (supercomplex SCI(1)III(2)IV(1) and megacomplex MCI(2)III(2)IV(2)). Found in a complex with TMEM177, COA6, COX18, COX20, SCO1 and SCO2. Interacts with TMEM177 in a COX20-dependent manner. Interacts with COX20. Interacts with COX16. Requires Cu cation as cofactor.

The protein localises to the mitochondrion inner membrane. It catalyses the reaction 4 Fe(II)-[cytochrome c] + O2 + 8 H(+)(in) = 4 Fe(III)-[cytochrome c] + 2 H2O + 4 H(+)(out). Component of the cytochrome c oxidase, the last enzyme in the mitochondrial electron transport chain which drives oxidative phosphorylation. The respiratory chain contains 3 multisubunit complexes succinate dehydrogenase (complex II, CII), ubiquinol-cytochrome c oxidoreductase (cytochrome b-c1 complex, complex III, CIII) and cytochrome c oxidase (complex IV, CIV), that cooperate to transfer electrons derived from NADH and succinate to molecular oxygen, creating an electrochemical gradient over the inner membrane that drives transmembrane transport and the ATP synthase. Cytochrome c oxidase is the component of the respiratory chain that catalyzes the reduction of oxygen to water. Electrons originating from reduced cytochrome c in the intermembrane space (IMS) are transferred via the dinuclear copper A center (CU(A)) of subunit 2 and heme A of subunit 1 to the active site in subunit 1, a binuclear center (BNC) formed by heme A3 and copper B (CU(B)). The BNC reduces molecular oxygen to 2 water molecules using 4 electrons from cytochrome c in the IMS and 4 protons from the mitochondrial matrix. This Propithecus tattersalli (Golden-crowned Sifaka) protein is Cytochrome c oxidase subunit 2 (MT-CO2).